The following is a 230-amino-acid chain: 5'-methylthioadenosine/S-adenosylhomocysteine nucleosidase (230 aa).

The Proton acceptor role is filled by Glu-12. Residues Gly-78, Met-153, and 174–175 (ME) contribute to the substrate site. Catalysis depends on Asp-198, which acts as the Proton donor.

It belongs to the PNP/UDP phosphorylase family. MtnN subfamily.

The enzyme catalyses S-adenosyl-L-homocysteine + H2O = S-(5-deoxy-D-ribos-5-yl)-L-homocysteine + adenine. It catalyses the reaction S-methyl-5'-thioadenosine + H2O = 5-(methylsulfanyl)-D-ribose + adenine. It carries out the reaction 5'-deoxyadenosine + H2O = 5-deoxy-D-ribose + adenine. It participates in amino-acid biosynthesis; L-methionine biosynthesis via salvage pathway; S-methyl-5-thio-alpha-D-ribose 1-phosphate from S-methyl-5'-thioadenosine (hydrolase route): step 1/2. Catalyzes the irreversible cleavage of the glycosidic bond in both 5'-methylthioadenosine (MTA) and S-adenosylhomocysteine (SAH/AdoHcy) to adenine and the corresponding thioribose, 5'-methylthioribose and S-ribosylhomocysteine, respectively. Also cleaves 5'-deoxyadenosine, a toxic by-product of radical S-adenosylmethionine (SAM) enzymes, into 5-deoxyribose and adenine. The chain is 5'-methylthioadenosine/S-adenosylhomocysteine nucleosidase from Tolumonas auensis (strain DSM 9187 / NBRC 110442 / TA 4).